A 225-amino-acid polypeptide reads, in one-letter code: 7-cyano-7-deazaguanine synthase (225 aa).

L10–A20 provides a ligand contact to ATP. Positions 191, 199, 202, and 205 each coordinate Zn(2+).

The protein belongs to the QueC family. Zn(2+) is required as a cofactor.

It catalyses the reaction 7-carboxy-7-deazaguanine + NH4(+) + ATP = 7-cyano-7-deazaguanine + ADP + phosphate + H2O + H(+). Its pathway is purine metabolism; 7-cyano-7-deazaguanine biosynthesis. Functionally, catalyzes the ATP-dependent conversion of 7-carboxy-7-deazaguanine (CDG) to 7-cyano-7-deazaguanine (preQ(0)). This Prochlorococcus marinus (strain NATL1A) protein is 7-cyano-7-deazaguanine synthase.